Consider the following 772-residue polypeptide: Uracil catabolism protein 2 (772 aa).

A disordered region spans residues 1 to 70 (MDINSNASVS…KKPRKKRKTF (70 aa)). Residues 39 to 51 (HPEDSARAKERSE) are compositionally biased toward basic and acidic residues. Basic residues predominate over residues 59 to 69 (GNKKPRKKRKT). The zn(2)-C6 fungal-type DNA-binding region spans 72–101 (CDTCRRVKTRCDFEPFIGKCYRCNVLQLDC).

The protein belongs to the URC2 family.

The protein resides in the cytoplasm. The protein localises to the nucleus. Functionally, probable transcriptional activator involved in uracil catabolism. The chain is Uracil catabolism protein 2 (URC2) from Saccharomyces cerevisiae (strain ATCC 204508 / S288c) (Baker's yeast).